A 375-amino-acid polypeptide reads, in one-letter code: 23S rRNA (uracil(747)-C(5))-methyltransferase RlmC (375 aa).

[4Fe-4S] cluster contacts are provided by cysteine 3, cysteine 11, cysteine 14, and cysteine 87. Positions 212, 241, 262, and 307 each coordinate S-adenosyl-L-methionine. The active-site Nucleophile is cysteine 334.

It belongs to the class I-like SAM-binding methyltransferase superfamily. RNA M5U methyltransferase family. RlmC subfamily.

It catalyses the reaction uridine(747) in 23S rRNA + S-adenosyl-L-methionine = 5-methyluridine(747) in 23S rRNA + S-adenosyl-L-homocysteine + H(+). Catalyzes the formation of 5-methyl-uridine at position 747 (m5U747) in 23S rRNA. The polypeptide is 23S rRNA (uracil(747)-C(5))-methyltransferase RlmC (Escherichia fergusonii (strain ATCC 35469 / DSM 13698 / CCUG 18766 / IAM 14443 / JCM 21226 / LMG 7866 / NBRC 102419 / NCTC 12128 / CDC 0568-73)).